The primary structure comprises 208 residues: N-(5'-phosphoribosyl)anthranilate isomerase (208 aa).

It belongs to the TrpF family.

It catalyses the reaction N-(5-phospho-beta-D-ribosyl)anthranilate = 1-(2-carboxyphenylamino)-1-deoxy-D-ribulose 5-phosphate. It functions in the pathway amino-acid biosynthesis; L-tryptophan biosynthesis; L-tryptophan from chorismate: step 3/5. The protein is N-(5'-phosphoribosyl)anthranilate isomerase of Neisseria gonorrhoeae (strain NCCP11945).